Consider the following 177-residue polypeptide: Alpha-crystallin B chain (177 aa).

Met-1 bears the N-acetylmethionine mark. Residues 58–166 enclose the sHSP domain; it reads RMPSWAQTGL…PERSVPISRD (109 aa). Residues His-85, His-106, Glu-108, His-113, and His-121 each coordinate Zn(2+). Over residues 155 to 169 the composition is skewed to basic and acidic residues; the sequence is DVPERSVPISRDEKP. Positions 155–177 are disordered; the sequence is DVPERSVPISRDEKPAVAGPQQK.

The protein belongs to the small heat shock protein (HSP20) family. As to quaternary structure, heteromer composed of three CRYAA and one CRYAB subunits. Aggregates with homologous proteins, including the small heat shock protein HSPB1, to form large heteromeric complexes. Inter-subunit bridging via zinc ions enhances stability, which is crucial as there is no protein turn over in the lens. Interacts with HSPBAP1 and TTN/titin.

May contribute to the transparency and refractive index of the lens. The polypeptide is Alpha-crystallin B chain (CRYAB) (Squalus acanthias (Spiny dogfish)).